The chain runs to 363 residues: Homeobox protein Hox-A2 (363 aa).

Disordered regions lie at residues 23-133 (TSFP…SRRL) and 183-216 (MKHK…DEEK). Polar residues-rich tracts occupy residues 31 to 46 (TFQS…SHST) and 55 to 78 (TIPS…NGTS). The short motif at 88–93 (EYPWMK) is the Antp-type hexapeptide element. Residues 130-189 (SRRLRTAYTNTQLLELEKEFHFNKYLCRPRRVEIAALLDLTERQVKVWFQNRRMKHKRQT) constitute a DNA-binding region (homeobox).

The protein belongs to the Antp homeobox family. Proboscipedia subfamily.

It is found in the nucleus. Sequence-specific transcription factor which is part of a developmental regulatory system that provides cells with specific positional identities on the anterior-posterior axis. The sequence is that of Homeobox protein Hox-A2 (HOXA2) from Heterodontus francisci (Horn shark).